The sequence spans 150 residues: D-aminoacyl-tRNA deacylase (150 aa).

A Gly-cisPro motif, important for rejection of L-amino acids motif is present at residues 136–137 (GP).

Belongs to the DTD family. In terms of assembly, homodimer.

It is found in the cytoplasm. It catalyses the reaction glycyl-tRNA(Ala) + H2O = tRNA(Ala) + glycine + H(+). The enzyme catalyses a D-aminoacyl-tRNA + H2O = a tRNA + a D-alpha-amino acid + H(+). Its function is as follows. An aminoacyl-tRNA editing enzyme that deacylates mischarged D-aminoacyl-tRNAs. Also deacylates mischarged glycyl-tRNA(Ala), protecting cells against glycine mischarging by AlaRS. Acts via tRNA-based rather than protein-based catalysis; rejects L-amino acids rather than detecting D-amino acids in the active site. By recycling D-aminoacyl-tRNA to D-amino acids and free tRNA molecules, this enzyme counteracts the toxicity associated with the formation of D-aminoacyl-tRNA entities in vivo and helps enforce protein L-homochirality. In Staphylococcus aureus (strain Mu50 / ATCC 700699), this protein is D-aminoacyl-tRNA deacylase.